We begin with the raw amino-acid sequence, 473 residues long: Ribulose bisphosphate carboxylase large chain (473 aa).

Substrate-binding residues include Asn116 and Thr166. Residue Lys168 is the Proton acceptor of the active site. Lys170 lines the substrate pocket. 3 residues coordinate Mg(2+): Lys194, Asp196, and Glu197. Lys194 bears the N6-carboxylysine mark. The active-site Proton acceptor is His287. Residues Arg288, His320, and Ser372 each contribute to the substrate site.

This sequence belongs to the RuBisCO large chain family. Type I subfamily. In terms of assembly, heterohexadecamer of 8 large chains and 8 small chains. Mg(2+) serves as cofactor.

The catalysed reaction is 2 (2R)-3-phosphoglycerate + 2 H(+) = D-ribulose 1,5-bisphosphate + CO2 + H2O. It catalyses the reaction D-ribulose 1,5-bisphosphate + O2 = 2-phosphoglycolate + (2R)-3-phosphoglycerate + 2 H(+). Its function is as follows. RuBisCO catalyzes two reactions: the carboxylation of D-ribulose 1,5-bisphosphate, the primary event in carbon dioxide fixation, as well as the oxidative fragmentation of the pentose substrate. Both reactions occur simultaneously and in competition at the same active site. This chain is Ribulose bisphosphate carboxylase large chain, found in Rhodobacter capsulatus (strain ATCC BAA-309 / NBRC 16581 / SB1003).